Reading from the N-terminus, the 242-residue chain is Thaumatin-like protein 2 (242 aa).

The N-terminal stretch at 1-23 (MMKTLGAVLSLSLTLLSFGGAHA) is a signal peptide. 8 disulfides stabilise this stretch: cysteine 32–cysteine 241, cysteine 77–cysteine 87, cysteine 92–cysteine 99, cysteine 147–cysteine 230, cysteine 152–cysteine 213, cysteine 160–cysteine 176, cysteine 180–cysteine 189, and cysteine 190–cysteine 200.

It belongs to the thaumatin family. Preferentially expressed in the abscission zone of fruit. Also expressed in leaf abscission zone.

Its subcellular location is the secreted. In terms of biological role, may be involved in protecting plant tissues from pathogen infection. In Prunus persica (Peach), this protein is Thaumatin-like protein 2.